The primary structure comprises 98 residues: Aspartyl/glutamyl-tRNA(Asn/Gln) amidotransferase subunit C (98 aa).

This sequence belongs to the GatC family. In terms of assembly, heterotrimer of A, B and C subunits.

The catalysed reaction is L-glutamyl-tRNA(Gln) + L-glutamine + ATP + H2O = L-glutaminyl-tRNA(Gln) + L-glutamate + ADP + phosphate + H(+). It catalyses the reaction L-aspartyl-tRNA(Asn) + L-glutamine + ATP + H2O = L-asparaginyl-tRNA(Asn) + L-glutamate + ADP + phosphate + 2 H(+). Its function is as follows. Allows the formation of correctly charged Asn-tRNA(Asn) or Gln-tRNA(Gln) through the transamidation of misacylated Asp-tRNA(Asn) or Glu-tRNA(Gln) in organisms which lack either or both of asparaginyl-tRNA or glutaminyl-tRNA synthetases. The reaction takes place in the presence of glutamine and ATP through an activated phospho-Asp-tRNA(Asn) or phospho-Glu-tRNA(Gln). In Kocuria rhizophila (strain ATCC 9341 / DSM 348 / NBRC 103217 / DC2201), this protein is Aspartyl/glutamyl-tRNA(Asn/Gln) amidotransferase subunit C.